The sequence spans 309 residues: Protein FdhE homolog (309 aa).

The disordered stretch occupies residues 1–22 (MSIRIVPQEQLEQNGKSTPEGH).

The protein belongs to the FdhE family.

The protein resides in the cytoplasm. In terms of biological role, necessary for formate dehydrogenase activity. The polypeptide is Protein FdhE homolog (Pectobacterium carotovorum subsp. carotovorum (strain PC1)).